The primary structure comprises 352 residues: Small glutamine-rich tetratricopeptide repeat-containing protein 2 (352 aa).

Over residues 80 to 97 (PAAASSSSTAPAAAAATP) the composition is skewed to low complexity. Positions 80-103 (PAAASSSSTAPAAAAATPSDEDLA) are disordered. 3 TPR repeats span residues 105-138 (AEQLKAEGNKAMSAKDYGAAIEAYGKAIELNPNS), 140-172 (VYFSNRAAAFSQIGQHDSAIDDAKQASKIDPKF), and 173-206 (GKAYSRLGHALFSSGRYQEAVEAYQKGVEVDPSN). The interval 217 to 236 (KEQLSSSSSSNANDATASRG) is disordered.

Belongs to the SGT family.

Functionally, co-chaperone that binds to the molecular chaperone Hsp70 and regulates Hsp70 ATPase activity. In Mycosarcoma maydis (Corn smut fungus), this protein is Small glutamine-rich tetratricopeptide repeat-containing protein 2.